The primary structure comprises 345 residues: Probable dual-specificity RNA methyltransferase RlmN (345 aa).

The active-site Proton acceptor is Glu98. In terms of domain architecture, Radical SAM core spans 104 to 332; that stretch reads TYKRLTVCVS…VSIRYSRGLE (229 aa). A disulfide bridge connects residues Cys111 and Cys337. The [4Fe-4S] cluster site is built by Cys118, Cys122, and Cys125. Residues 165–166, Ser195, 218–220, and Asn294 each bind S-adenosyl-L-methionine; these read GE and SLH. The active-site S-methylcysteine intermediate is the Cys337.

It belongs to the radical SAM superfamily. RlmN family. The cofactor is [4Fe-4S] cluster.

The protein localises to the cytoplasm. The enzyme catalyses adenosine(2503) in 23S rRNA + 2 reduced [2Fe-2S]-[ferredoxin] + 2 S-adenosyl-L-methionine = 2-methyladenosine(2503) in 23S rRNA + 5'-deoxyadenosine + L-methionine + 2 oxidized [2Fe-2S]-[ferredoxin] + S-adenosyl-L-homocysteine. It catalyses the reaction adenosine(37) in tRNA + 2 reduced [2Fe-2S]-[ferredoxin] + 2 S-adenosyl-L-methionine = 2-methyladenosine(37) in tRNA + 5'-deoxyadenosine + L-methionine + 2 oxidized [2Fe-2S]-[ferredoxin] + S-adenosyl-L-homocysteine. Its function is as follows. Specifically methylates position 2 of adenine 2503 in 23S rRNA and position 2 of adenine 37 in tRNAs. The chain is Probable dual-specificity RNA methyltransferase RlmN from Trichodesmium erythraeum (strain IMS101).